The sequence spans 390 residues: Protein-glutamate methylesterase/protein-glutamine glutaminase 1 (390 aa).

Residues 4–121 (KVLVVDDSGF…SRNPQKVKQL (118 aa)) enclose the Response regulatory domain. Position 55 is a 4-aspartylphosphate (D55). The segment covering 132 to 186 (SNRRSSGIGSASAASPAPAAPAPSTLSSRAPAPSAAAPARAVPSRTVAPAAAPAA) has biased composition (low complexity). Positions 132–201 (SNRRSSGIGS…PAHPTTTGTA (70 aa)) are disordered. Residues 195–387 (PTTTGTAKRK…LDDIGRHLVE (193 aa)) form the CheB-type methylesterase domain. Residues S214, H241, and D334 contribute to the active site.

It belongs to the CheB family. Phosphorylated by CheA. Phosphorylation of the N-terminal regulatory domain activates the methylesterase activity.

Its subcellular location is the cytoplasm. It carries out the reaction [protein]-L-glutamate 5-O-methyl ester + H2O = L-glutamyl-[protein] + methanol + H(+). The catalysed reaction is L-glutaminyl-[protein] + H2O = L-glutamyl-[protein] + NH4(+). Its function is as follows. Involved in chemotaxis. Part of a chemotaxis signal transduction system that modulates chemotaxis in response to various stimuli. Catalyzes the demethylation of specific methylglutamate residues introduced into the chemoreceptors (methyl-accepting chemotaxis proteins or MCP) by CheR. Also mediates the irreversible deamidation of specific glutamine residues to glutamic acid. This is Protein-glutamate methylesterase/protein-glutamine glutaminase 1 from Pseudomonas syringae pv. tomato (strain ATCC BAA-871 / DC3000).